Consider the following 4377-residue polypeptide: Ankyrin-3 (4377 aa).

The tract at residues 1–44 (MAHAASQLKKNRDLEINAEEEPEKKRKHRKRSRDRKKKSDANAS) is disordered. A compositionally biased stretch (basic residues) spans 25 to 38 (KRKHRKRSRDRKKK). Serine 39 is subject to Phosphoserine. 23 ANK repeats span residues 73 to 102 (NGLNALHLASKEGHVEVVSELLQREANVDA), 106 to 135 (KGNTALHIASLAGQAEVVKVLVTNGANVNA), 139 to 168 (NGFTPLYMAAQENHLEVVKFLLDNGASQSL), 172 to 201 (DGFTPLAVALQQGHDQVVSLLLENDTKGKV), 203 to 230 (LPALHIAARKDDTKAAALLLQNDNNADV), 234 to 263 (SGFTPLHIAAHYGNINVATLLLNRAAAVDF), 267 to 296 (NDITPLHVASKRGNANMVKLLLDRGAKIDA), 300 to 329 (DGLTPLHCGARSGHEQVVEMLLDRAAPILS), 333 to 362 (NGLSPLHMATQGDHLNCVQLLLQHNVPVDD), 366 to 395 (DYLTALHVAAHCGHYKVAKVLLDKKANPNA), 399 to 428 (NGFTPLHIACKKNRIKVMELLLKHGASIQA), 432 to 461 (SGLTPIHVAAFMGHVNIVSQLMHHGASPNT), 465 to 494 (RGETALHMAARSGQAEVVRYLVQDGAQVEA), 498 to 527 (DDQTPLHISARLGKADIVQQLLQQGASPNA), 531 to 560 (SGYTPLHLSAREGHEDVAAFLLDHGASLSI), 564 to 593 (KGFTPLHVAAKYGKLEVANLLLQKSASPDA), 597 to 626 (SGLTPLHVAAHYDNQKVALLLLDQGASPHA), 630 to 659 (NGYTPLHIAAKKNQMDIATTLLEYGADANA), 663 to 692 (QGIASVHLAAQEGHVDMVSLLLGRNANVNL), 696 to 725 (SGLTPLHLAAQEDRVNVAEVLVNQGAHVDA), 729 to 758 (MGYTPLHVGCHYGNIKIVNFLLQHSAKVNA), 762 to 791 (NGYTPLHQAAQQGHTHIINVLLQNNASPNE), and 795 to 825 (NGNTALGIARRLGYISVVDTLKIVTEETMTT). At threonine 468 the chain carries Phosphoserine. At serine 623 the chain carries Phosphoserine. A phosphoserine mark is found at threonine 765 and glutamate 791. 9 positions are modified to phosphoserine: serine 847, serine 861, serine 867, serine 913, serine 916, serine 922, serine 957, serine 959, and serine 1113. ZU5 domains lie at 984–1139 (FLVS…VVSR) and 1141–1288 (KQES…LADC). Positions 1273–1407 (VSFTTNVSAR…SIKIRDTSQE (135 aa)) are UPA domain. A phosphoserine mark is found at serine 1445, serine 1459, and serine 1470. The span at 1519–1539 (SGFTSLSSSSSNTPSASPLKS) shows a compositional bias: low complexity. Residues 1519–1540 (SGFTSLSSSSSNTPSASPLKSI) are disordered. Residues serine 1622, serine 1625, serine 1632, isoleucine 1651, leucine 1658, serine 1984, serine 2111, serine 2123, and serine 2126 each carry the phosphoserine modification. Disordered regions lie at residues 1968 to 1987 (VDNKGSPKSPKSDKGHSPED), 2107 to 2159 (TILE…VPIP), 2176 to 2245 (YDPS…EETH), 2299 to 2322 (AVSPDVHKSAAETSAQHAEKDNQM), 2383 to 2433 (FPCS…ISDD), 2474 to 2508 (DVSHSDTEESVTDHAGPPSSELQGSDKRSREKIAT), 2588 to 2751 (LTEV…VKKI), 2795 to 2824 (QSNEIVVNDSGSDNVKKQRTEMSSKAMPDS), 3036 to 3067 (PPLEETETSPTKSPDSLEFSPGKESPSSDVFD), 3131 to 3272 (TFYT…KKHH), 3298 to 3516 (PVIR…SVFP), 3538 to 3607 (KGLD…HEGK), 3635 to 3718 (GEHT…DPKL), 3868 to 3897 (KATSPKDTFPPNHMSNTKASKMKQVSQSEK), and 4019 to 4090 (KKMQ…CERT). Positions 1977–1986 (PKSDKGHSPE) are enriched in basic and acidic residues. The span at 2115 to 2136 (FSQHDQDKSPLSDSGFETRSEK) shows a compositional bias: basic and acidic residues. Over residues 2137–2146 (TPSAPQSAES) the composition is skewed to polar residues. Residues 2299–2308 (AVSPDVHKSA) show a composition bias toward basic and acidic residues. A compositionally biased stretch (acidic residues) spans 2390–2399 (GQQEEEELTA). Over residues 2407–2417 (LESSRVNTPVS) the composition is skewed to polar residues. Basic and acidic residues-rich tracts occupy residues 2497–2508 (GSDKRSREKIAT) and 2588–2612 (LTEVSQFFRDKTEKLNDELQSPEKK). Residues 2622 to 2631 (SSQSPTSSSP) show a composition bias toward low complexity. Polar residues predominate over residues 2706–2716 (SGFQLKQSKLS). The segment covering 2720 to 2742 (LKFEQGTHAKSKDMSQEDRKSDG) has biased composition (basic and acidic residues). A compositionally biased stretch (polar residues) spans 2796–2807 (SNEIVVNDSGSD). Composition is skewed to polar residues over residues 3154-3186 (EQVSFLDSSGKSPLTPETPSSEEVSYEFTSKTP) and 3214-3224 (KSTSLKQTTVE). Basic and acidic residues-rich tracts occupy residues 3227-3242 (AVEREMPNDVSKDSNQ) and 3335-3361 (KLKEVDDEQKEKPKASAEKASNQKELE). Over residues 3377-3402 (SPQNEIAQNGNNDQSITECSIATTAE) the composition is skewed to polar residues. A compositionally biased stretch (acidic residues) spans 3409 to 3428 (ATEIDSLDGYDLQDEDDGLT). 2 stretches are compositionally biased toward basic and acidic residues: residues 3465 to 3481 (EVIEEEGKVGPDEDKPP) and 3549 to 3575 (RGDDEVFDSKSREDETKPFGLAVEDRS). Over residues 3576 to 3598 (PATTPDTTPARTPTDESTPTSEP) the composition is skewed to low complexity. A compositionally biased stretch (basic and acidic residues) spans 3637–3651 (HTSEGKSGDQGEGDK). Polar residues-rich tracts occupy residues 3654-3669 (VTATPQPQSGDTTVET), 3676-3713 (ETPTVEPNPSIPTSGECQEGTSSSGSLEKSAAATNTSK), 3880-3897 (HMSNTKASKMKQVSQSEK), and 4033-4052 (SRNTSLSETSRGGQPSVTTK). Residues 4053–4076 (SARDKKTEAAPLKSKSEKAGSEKR) are compositionally biased toward basic and acidic residues. Residues 4090–4174 (TDIRMAIVAD…DIVTLLEGPI (85 aa)) enclose the Death domain. Residues serine 4211 and serine 4229 each carry the phosphoserine modification. 2 disordered regions span residues 4251-4298 (NGSH…EPAS) and 4323-4377 (PVSM…KSHS). Residues 4268-4277 (PESQNDVGKQ) are compositionally biased toward polar residues. Serine 4290 and serine 4298 each carry phosphoserine. Over residues 4337-4347 (GKPRLSLHEEE) the composition is skewed to basic and acidic residues. Position 4350 is a phosphoserine (serine 4350). A compositionally biased stretch (basic residues) spans 4362–4377 (VKTKKEIRHVEKKSHS).

As to quaternary structure, directly interacts with DMD and betaDAG1. This interaction does not interfere with binding between DMD and betaDAG1. It is also required for DMD and betaDAG1 retention at costameres. Interacts (via N-terminal ANK repeats) with SCHIP1 isoform 5 (via C-terminus); this interaction is required for the localization at axon initial segments (AISs) and nodes of Ranvier (NRs). May be a constituent of a NFASC/NRCAM/ankyrin G complex. Interacts with RHBG. Interacts with PLEC and FLNC. Interacts with KCNA1; this inhibits channel activity. Interacts (via ANK repeats) with IQCJ-SCHIP1; required for IQCJ-SCHIP1 localization at axon initial segments (AIS) and nodes of Ranvier. Interacts with SCHIP1. Interacts with SCN5A. Interacts with PKP2 and GJA1/CX43. In terms of tissue distribution, expressed in brain, neurons, muscles and other tissues.

Its subcellular location is the cytoplasm. The protein resides in the cytoskeleton. The protein localises to the cell projection. It localises to the axon. It is found in the cell membrane. Its subcellular location is the sarcolemma. The protein resides in the postsynaptic cell membrane. The protein localises to the lysosome. It localises to the T-tubule. It is found in the golgi apparatus. Membrane-cytoskeleton linker. May participate in the maintenance/targeting of ion channels and cell adhesion molecules at the nodes of Ranvier and axonal initial segments. In skeletal muscle, required for costamere localization of DMD and betaDAG1. Regulates KCNA1 channel activity in function of dietary Mg(2+) levels, and thereby contributes to the regulation of renal Mg(2+) reabsorption. Required for intracellular adhesion and junctional conductance in myocytes, potentially via stabilization of GJA1/CX43 protein abundance and promotion of PKP2, GJA1/CX43, and SCN5A/Nav1.5 localization to cell-cell junctions. Functionally, may be part of a Golgi-specific membrane cytoskeleton in association with beta-spectrin. The protein is Ankyrin-3 of Homo sapiens (Human).